We begin with the raw amino-acid sequence, 409 residues long: Argininosuccinate synthase (409 aa).

Residues 11–19 and Ala-38 contribute to the ATP site; that span reads AYSGGLDTS. L-citrulline is bound by residues Tyr-91 and Ser-96. Residue Gly-121 coordinates ATP. L-aspartate is bound by residues Thr-123, Asn-127, and Asp-128. Asn-127 contributes to the L-citrulline binding site. The L-citrulline site is built by Arg-131, Ser-182, Ser-191, Glu-267, and Tyr-279.

The protein belongs to the argininosuccinate synthase family. Type 1 subfamily. As to quaternary structure, homotetramer.

The protein resides in the cytoplasm. It carries out the reaction L-citrulline + L-aspartate + ATP = 2-(N(omega)-L-arginino)succinate + AMP + diphosphate + H(+). Its pathway is amino-acid biosynthesis; L-arginine biosynthesis; L-arginine from L-ornithine and carbamoyl phosphate: step 2/3. The sequence is that of Argininosuccinate synthase from Nitrobacter winogradskyi (strain ATCC 25391 / DSM 10237 / CIP 104748 / NCIMB 11846 / Nb-255).